The sequence spans 231 residues: tRNA (guanine-N(1)-)-methyltransferase (231 aa).

Residues Gly-111 and 131 to 136 each bind S-adenosyl-L-methionine; that span reads LGNYVL.

It belongs to the RNA methyltransferase TrmD family. As to quaternary structure, homodimer.

It is found in the cytoplasm. It carries out the reaction guanosine(37) in tRNA + S-adenosyl-L-methionine = N(1)-methylguanosine(37) in tRNA + S-adenosyl-L-homocysteine + H(+). In terms of biological role, specifically methylates guanosine-37 in various tRNAs. The polypeptide is tRNA (guanine-N(1)-)-methyltransferase (Leptospira interrogans serogroup Icterohaemorrhagiae serovar copenhageni (strain Fiocruz L1-130)).